The following is a 489-amino-acid chain: Aspartate/glutamate permease AcaP (489 aa).

The next 12 membrane-spanning stretches (helical) occupy residues 6 to 26 (IRWF…GNVV), 36 to 56 (VVTS…LIVG), 91 to 111 (VVHI…FGWV), 122 to 142 (MSMT…LWLS), 152 to 172 (IGGL…VMAI), 195 to 215 (IPKF…AVGG), 238 to 258 (FLLA…MGMI), 290 to 310 (LMIV…AFSI), 342 to 362 (GYTL…LGIG), 373 to 393 (NLNS…FIML), 413 to 433 (AMIA…LGMV), and 449 to 469 (LASN…LPFI).

This sequence belongs to the amino acid-polyamine-organocation (APC) superfamily. Glutamate:GABA antiporter (GGA) (TC 2.A.3.7) family.

It is found in the cell membrane. In terms of biological role, involved in aspartate and glutamate uptake. Plays no significant role in the excretion of accumulated glutamate. This chain is Aspartate/glutamate permease AcaP, found in Lactococcus lactis subsp. cremoris (strain MG1363).